The chain runs to 618 residues: Dihydroxy-acid dehydratase (618 aa).

Asp81 contributes to the Mg(2+) binding site. Cys122 is a binding site for [2Fe-2S] cluster. Asp123 and Lys124 together coordinate Mg(2+). The residue at position 124 (Lys124) is an N6-carboxylysine. Cys195 is a [2Fe-2S] cluster binding site. Glu493 is a binding site for Mg(2+). Ser519 serves as the catalytic Proton acceptor.

Belongs to the IlvD/Edd family. Homodimer. The cofactor is [2Fe-2S] cluster. Requires Mg(2+) as cofactor.

The enzyme catalyses (2R)-2,3-dihydroxy-3-methylbutanoate = 3-methyl-2-oxobutanoate + H2O. It catalyses the reaction (2R,3R)-2,3-dihydroxy-3-methylpentanoate = (S)-3-methyl-2-oxopentanoate + H2O. It participates in amino-acid biosynthesis; L-isoleucine biosynthesis; L-isoleucine from 2-oxobutanoate: step 3/4. The protein operates within amino-acid biosynthesis; L-valine biosynthesis; L-valine from pyruvate: step 3/4. Its function is as follows. Functions in the biosynthesis of branched-chain amino acids. Catalyzes the dehydration of (2R,3R)-2,3-dihydroxy-3-methylpentanoate (2,3-dihydroxy-3-methylvalerate) into 2-oxo-3-methylpentanoate (2-oxo-3-methylvalerate) and of (2R)-2,3-dihydroxy-3-methylbutanoate (2,3-dihydroxyisovalerate) into 2-oxo-3-methylbutanoate (2-oxoisovalerate), the penultimate precursor to L-isoleucine and L-valine, respectively. In Shewanella amazonensis (strain ATCC BAA-1098 / SB2B), this protein is Dihydroxy-acid dehydratase.